A 204-amino-acid chain; its full sequence is Holliday junction branch migration complex subunit RuvA (204 aa).

The interval 1–64 is domain I; the sequence is MIGRLQGILL…EDAHLLFGFA (64 aa). A domain II region spans residues 65 to 143; the sequence is QKTDRTLFRE…GIKQSDFFVE (79 aa). The tract at residues 144–155 is flexible linker; it reads STHIPLSPSIES. Positions 156-204 are domain III; that stretch reads HSESSSDEAISALIALGYKPAEAEKMVKRVAKPELTSEQVIREALKAAL.

The protein belongs to the RuvA family. In terms of assembly, homotetramer. Forms an RuvA(8)-RuvB(12)-Holliday junction (HJ) complex. HJ DNA is sandwiched between 2 RuvA tetramers; dsDNA enters through RuvA and exits via RuvB. An RuvB hexamer assembles on each DNA strand where it exits the tetramer. Each RuvB hexamer is contacted by two RuvA subunits (via domain III) on 2 adjacent RuvB subunits; this complex drives branch migration. In the full resolvosome a probable DNA-RuvA(4)-RuvB(12)-RuvC(2) complex forms which resolves the HJ.

The protein localises to the cytoplasm. Functionally, the RuvA-RuvB-RuvC complex processes Holliday junction (HJ) DNA during genetic recombination and DNA repair, while the RuvA-RuvB complex plays an important role in the rescue of blocked DNA replication forks via replication fork reversal (RFR). RuvA specifically binds to HJ cruciform DNA, conferring on it an open structure. The RuvB hexamer acts as an ATP-dependent pump, pulling dsDNA into and through the RuvAB complex. HJ branch migration allows RuvC to scan DNA until it finds its consensus sequence, where it cleaves and resolves the cruciform DNA. The chain is Holliday junction branch migration complex subunit RuvA from Haemophilus influenzae (strain 86-028NP).